Reading from the N-terminus, the 319-residue chain is Ribosomal large subunit pseudouridine synthase C (319 aa).

In terms of domain architecture, S4 RNA-binding spans 20 to 83; sequence QRIDNFLRTQ…AEREEEAVSP (64 aa). Aspartate 144 is a catalytic residue.

The protein belongs to the pseudouridine synthase RluA family.

The catalysed reaction is uridine(955/2504/2580) in 23S rRNA = pseudouridine(955/2504/2580) in 23S rRNA. In terms of biological role, responsible for synthesis of pseudouridine from uracil at positions 955, 2504 and 2580 in 23S ribosomal RNA. The protein is Ribosomal large subunit pseudouridine synthase C of Escherichia coli (strain K12).